A 38-amino-acid chain; its full sequence is Photosystem II reaction center protein X (38 aa).

Residues 9–29 traverse the membrane as a helical segment; the sequence is ISSLTAGGLVVLTIAVALIVI.

The protein belongs to the PsbX family. Type 1 subfamily. As to quaternary structure, PSII is composed of 1 copy each of membrane proteins PsbA, PsbB, PsbC, PsbD, PsbE, PsbF, PsbH, PsbI, PsbJ, PsbK, PsbL, PsbM, PsbT, PsbX, PsbY, PsbZ, Psb30/Ycf12, at least 3 peripheral proteins of the oxygen-evolving complex and a large number of cofactors. It forms dimeric complexes.

Its subcellular location is the plastid. The protein resides in the chloroplast thylakoid membrane. Functionally, involved in the binding and/or turnover of quinones at the Q(B) site of photosystem II (PSII). PSII is a light-driven water plastoquinone oxidoreductase, using light energy to abstract electrons from H(2)O, generating a proton gradient subsequently used for ATP formation. The chain is Photosystem II reaction center protein X from Trieres chinensis (Marine centric diatom).